Consider the following 541-residue polypeptide: Chaperonin GroEL (541 aa).

Residues 29 to 32, 86 to 90, Gly-413, 476 to 478, and Asp-492 each bind ATP; these read TLGP, DGTTT, and NAA.

It belongs to the chaperonin (HSP60) family. In terms of assembly, forms a cylinder of 14 subunits composed of two heptameric rings stacked back-to-back. Interacts with the co-chaperonin GroES.

The protein resides in the cytoplasm. It catalyses the reaction ATP + H2O + a folded polypeptide = ADP + phosphate + an unfolded polypeptide.. Functionally, together with its co-chaperonin GroES, plays an essential role in assisting protein folding. The GroEL-GroES system forms a nano-cage that allows encapsulation of the non-native substrate proteins and provides a physical environment optimized to promote and accelerate protein folding. In Enterococcus faecalis (strain ATCC 700802 / V583), this protein is Chaperonin GroEL.